A 143-amino-acid polypeptide reads, in one-letter code: 6,7-dimethyl-8-ribityllumazine synthase (143 aa).

5-amino-6-(D-ribitylamino)uracil contacts are provided by residues phenylalanine 13, 45-47 (TFD), and 69-71 (CVI). 74-75 (ET) serves as a coordination point for (2S)-2-hydroxy-3-oxobutyl phosphate. The Proton donor role is filled by histidine 77. Leucine 102 contacts 5-amino-6-(D-ribitylamino)uracil. Arginine 117 is a (2S)-2-hydroxy-3-oxobutyl phosphate binding site.

It belongs to the DMRL synthase family.

It catalyses the reaction (2S)-2-hydroxy-3-oxobutyl phosphate + 5-amino-6-(D-ribitylamino)uracil = 6,7-dimethyl-8-(1-D-ribityl)lumazine + phosphate + 2 H2O + H(+). Its pathway is cofactor biosynthesis; riboflavin biosynthesis; riboflavin from 2-hydroxy-3-oxobutyl phosphate and 5-amino-6-(D-ribitylamino)uracil: step 1/2. Catalyzes the formation of 6,7-dimethyl-8-ribityllumazine by condensation of 5-amino-6-(D-ribitylamino)uracil with 3,4-dihydroxy-2-butanone 4-phosphate. This is the penultimate step in the biosynthesis of riboflavin. In Archaeoglobus fulgidus (strain ATCC 49558 / DSM 4304 / JCM 9628 / NBRC 100126 / VC-16), this protein is 6,7-dimethyl-8-ribityllumazine synthase.